Consider the following 52-residue polypeptide: Creatine kinase B-type (52 aa).

The Phosphagen kinase C-terminal domain maps to 1-52 (AKVLTLDLYKKLRDKSTPSGFTLDDIIQNEHLGYVLTCPSNLGTXLRAXVHV). The Phosphagen kinase N-terminal domain maps to 1–52 (AKVLTLDLYKKLRDKSTPSGFTLDDIIQNEHLGYVLTCPSNLGTXLRAXVHV). Positions 13 and 47 each coordinate ATP.

It belongs to the ATP:guanido phosphotransferase family. Dimer of identical or non-identical chains, which can be either B (brain type) or M (muscle type). With MM being the major form in skeletal muscle and myocardium, MB existing in myocardium, and BB existing in many tissues, especially brain. In terms of tissue distribution, expressed in rectal gland, brain, skeletal muscle (at protein level).

It localises to the cytoplasm. The protein resides in the cytosol. The protein localises to the mitochondrion. Its subcellular location is the basal cell membrane. The enzyme catalyses creatine + ATP = N-phosphocreatine + ADP + H(+). Reversibly catalyzes the transfer of phosphate between ATP and various phosphogens (e.g. creatine phosphate). Creatine kinase isoenzymes play a central role in energy transduction in tissues with large, fluctuating energy demands, such as skeletal muscle, heart, brain and spermatozoa. This Squalus acanthias (Spiny dogfish) protein is Creatine kinase B-type.